A 135-amino-acid chain; its full sequence is C-type lectin PAL (135 aa).

Intrachain disulfides connect C3/C14, C31/C131, C38/C133, and C106/C123. In terms of domain architecture, C-type lectin spans 10-132; it reads MNGLCYKIFD…CGSKNAFLCQ (123 aa). Q96, D98, E104, N119, and D120 together coordinate Ca(2+). The Galactose-binding motif lies at 96-98; that stretch reads QPD.

This sequence belongs to the true venom lectin family. As to quaternary structure, homodimer; disulfide-linked. As to expression, expressed by the venom gland.

Its subcellular location is the secreted. Galactose-binding lectin which recognizes specific carbohydrate structures and agglutinates a variety of animal cells by binding to cell-surface glycoproteins and glycolipids. This is a calcium-dependent lectin. Shows high hemagglutinating activity (MHC is 0.25 ug/ml on rabbit erythrocytes). In Bitis arietans (African puff adder), this protein is C-type lectin PAL.